We begin with the raw amino-acid sequence, 345 residues long: Phosphoribosylformylglycinamidine cyclo-ligase (345 aa).

It belongs to the AIR synthase family.

The protein localises to the cytoplasm. The enzyme catalyses 2-formamido-N(1)-(5-O-phospho-beta-D-ribosyl)acetamidine + ATP = 5-amino-1-(5-phospho-beta-D-ribosyl)imidazole + ADP + phosphate + H(+). It functions in the pathway purine metabolism; IMP biosynthesis via de novo pathway; 5-amino-1-(5-phospho-D-ribosyl)imidazole from N(2)-formyl-N(1)-(5-phospho-D-ribosyl)glycinamide: step 2/2. The polypeptide is Phosphoribosylformylglycinamidine cyclo-ligase (Shewanella oneidensis (strain ATCC 700550 / JCM 31522 / CIP 106686 / LMG 19005 / NCIMB 14063 / MR-1)).